The following is a 218-amino-acid chain: Phosphoribosylformylglycinamidine synthase subunit PurQ (218 aa).

The Glutamine amidotransferase type-1 domain occupies 2–218 (RVGVIRFPGS…FFRGILKFRG (217 aa)). Residue Cys-85 is the Nucleophile of the active site. Active-site residues include His-192 and Glu-194.

Part of the FGAM synthase complex composed of 1 PurL, 1 PurQ and 2 PurS subunits.

The protein localises to the cytoplasm. It carries out the reaction N(2)-formyl-N(1)-(5-phospho-beta-D-ribosyl)glycinamide + L-glutamine + ATP + H2O = 2-formamido-N(1)-(5-O-phospho-beta-D-ribosyl)acetamidine + L-glutamate + ADP + phosphate + H(+). It catalyses the reaction L-glutamine + H2O = L-glutamate + NH4(+). It participates in purine metabolism; IMP biosynthesis via de novo pathway; 5-amino-1-(5-phospho-D-ribosyl)imidazole from N(2)-formyl-N(1)-(5-phospho-D-ribosyl)glycinamide: step 1/2. In terms of biological role, part of the phosphoribosylformylglycinamidine synthase complex involved in the purines biosynthetic pathway. Catalyzes the ATP-dependent conversion of formylglycinamide ribonucleotide (FGAR) and glutamine to yield formylglycinamidine ribonucleotide (FGAM) and glutamate. The FGAM synthase complex is composed of three subunits. PurQ produces an ammonia molecule by converting glutamine to glutamate. PurL transfers the ammonia molecule to FGAR to form FGAM in an ATP-dependent manner. PurS interacts with PurQ and PurL and is thought to assist in the transfer of the ammonia molecule from PurQ to PurL. The sequence is that of Phosphoribosylformylglycinamidine synthase subunit PurQ from Methanothermobacter thermautotrophicus (strain ATCC 29096 / DSM 1053 / JCM 10044 / NBRC 100330 / Delta H) (Methanobacterium thermoautotrophicum).